Here is a 75-residue protein sequence, read N- to C-terminus: Mitotic-spindle organizing protein 1 (75 aa).

The protein belongs to the MOZART1 family. As to quaternary structure, part of the gamma-tubulin complex.

It localises to the cytoplasm. It is found in the cytoskeleton. The protein resides in the microtubule organizing center. The protein localises to the centrosome. Its subcellular location is the spindle. In terms of biological role, required for gamma-tubulin complex recruitment to the centrosome. This is Mitotic-spindle organizing protein 1 (mzt1) from Danio rerio (Zebrafish).